The sequence spans 463 residues: Serine/threonine-protein kinase tricornered (463 aa).

Residues 93–394 enclose the Protein kinase domain; sequence FEALKVIGRG…LEDLKSVPFF (302 aa). Residues 99–107 and Lys122 each bind ATP; that span reads IGRGAFGEV. Residues 119–180 are interaction with mats and Mob1; sequence YAMKVLRKAD…EFLPGGDMMT (62 aa). The active-site Proton acceptor is the Asp216. Ser292 bears the Phosphoserine mark. Residues 395 to 463 form the AGC-kinase C-terminal domain; that stretch reads RGVDWEHIRE…YKRFEVRNLE (69 aa). At Thr453 the chain carries Phosphothreonine.

The protein belongs to the protein kinase superfamily. AGC Ser/Thr protein kinase family. In terms of assembly, interacts with, and is activated by, Mob1. It depends on Mg(2+) as a cofactor. Expressed in the peripheral and central nervous system (at protein level). Expressed in the wing imaginal disk.

Its subcellular location is the cytoplasm. The protein resides in the nucleus. It catalyses the reaction L-seryl-[protein] + ATP = O-phospho-L-seryl-[protein] + ADP + H(+). It carries out the reaction L-threonyl-[protein] + ATP = O-phospho-L-threonyl-[protein] + ADP + H(+). With respect to regulation, activated by fry. In terms of biological role, serine/threonine-protein kinase involved in controlling cell structure and proliferation of a variety of polarized outgrowths including epidermal hairs, bristles, arista laterals, and dendrites. Together with fry, maintains the integrity of epidermal hairs and is an essential component of the signaling pathway regulating dendritic branching of sensory neurons. Reduces neurite outgrowth by phosphorylating pav, thereby inhibiting its function in microtubule-microtubule sliding. The polypeptide is Serine/threonine-protein kinase tricornered (Drosophila melanogaster (Fruit fly)).